The primary structure comprises 524 residues: General transcription factor IIF subunit 1 (524 aa).

Disordered stretches follow at residues 56–76 (MYQEEEMPESGAGSEYNRKQR) and 181–462 (RLKD…IQLT). The segment covering 242–257 (KPQKKVPAKGGKKKKR) has biased composition (basic residues). The span at 262–289 (EALEDSDDGDFEGQEVDYMSDESSSDEE) shows a compositional bias: acidic residues. Residues 290–307 (LPGKIKPAKEEEGPKGLD) show a composition bias toward basic and acidic residues. 2 stretches are compositionally biased toward acidic residues: residues 308–327 (EQSESSEESEEEKAEEEEGE) and 347–358 (SDESETSEDSDI). A compositionally biased stretch (basic residues) spans 368 to 378 (QKKKTPPKKDK). A compositionally biased stretch (low complexity) spans 381–397 (GSNSSSRGNSRPGTPSP). Over residues 436-459 (PQNTSGKSTPQPQSGKSTPSSGDI) the composition is skewed to polar residues.

This sequence belongs to the TFIIF alpha subunit family. As to quaternary structure, heterodimer of an alpha and a beta subunit. Phosphorylated on Ser and other residues by TAF1 and casein kinase II-like kinases.

The protein resides in the nucleus. Its function is as follows. TFIIF is a general transcription initiation factor that binds to RNA polymerase II and helps to recruit it to the initiation complex in collaboration with TFIIB. It promotes transcription elongation. This Xenopus laevis (African clawed frog) protein is General transcription factor IIF subunit 1 (gtf2f1).